Reading from the N-terminus, the 958-residue chain is Translation initiation factor IF-2 (958 aa).

Disordered stretches follow at residues 67 to 95 (APAASRPAAPAPGPAAPKAPAPAPAAPAP) and 111 to 355 (PAPA…VPRG). Residues 75–95 (APAPGPAAPKAPAPAPAAPAP) are compositionally biased toward pro residues. Over residues 140–161 (PAPARQGGQAPRPGGPRPGNNP) the composition is skewed to low complexity. Positions 195–206 (RGERRNDGERPG) are enriched in basic and acidic residues. Low complexity predominate over residues 209-221 (RPAAGAGGPRPAA). Residues 228-241 (PGAPRPGAPRPGAP) show a composition bias toward pro residues. The segment covering 268 to 325 (GGAGRPGGAGRPGGGPGRPGGAPGAGTGGGAPAGGGFGKGGRGRGGTQGAFGKGGAGR) has biased composition (gly residues). Basic residues predominate over residues 326 to 335 (GKQRKSKRAK). Positions 450–621 (ARAPVVTVMG…AVLLTADAAL (172 aa)) constitute a tr-type G domain. The interval 459 to 466 (GHVDHGKT) is G1. 459–466 (GHVDHGKT) lines the GTP pocket. Residues 484–488 (GITQH) form a G2 region. Positions 509–512 (DTPG) are G3. GTP contacts are provided by residues 509 to 513 (DTPGH) and 563 to 566 (NKID). The tract at residues 563-566 (NKID) is G4. The interval 599 to 601 (SAR) is G5.

This sequence belongs to the TRAFAC class translation factor GTPase superfamily. Classic translation factor GTPase family. IF-2 subfamily.

It localises to the cytoplasm. Its function is as follows. One of the essential components for the initiation of protein synthesis. Protects formylmethionyl-tRNA from spontaneous hydrolysis and promotes its binding to the 30S ribosomal subunits. Also involved in the hydrolysis of GTP during the formation of the 70S ribosomal complex. The polypeptide is Translation initiation factor IF-2 (Paenarthrobacter aurescens (strain TC1)).